We begin with the raw amino-acid sequence, 1333 residues long: MTADKLVFFVNGRKVVEKNADPETTLLAYLRRKLGLSGTKLGCGEGGCGACTVMLSKYDRLQNKIVHFSANACLAPICSLHHVAVTTVEGIGSTKTRLHPVQERIAKSHGSQCGFCTPGIVMSMYTLLRNQPEPTMEEIENAFQGNLCRCTGYRPILQGFRTFARDGGCCGGDGNNPNCCMNQKKDHSVSLSPSLFKPEEFTPLDPTQEPIFPPELLRLKDTPRKQLRFEGERVTWIQASTLKELLDLKAQHPDAKLVVGNTEIGIEMKFKNMLFPMIVCPAWIPELNSVEHGPDGISFGAACPLSIVEKTLVDAVAKLPAQKTEVFRGVLEQLRWFAGKQVKSVASVGGNIITASPISDLNPVFMASGAKLTLVSRGTRRTVQMDHTFFPGYRKTLLSPEEILLSIEIPYSREGEYFSAFKQASRREDDIAKVTSGMRVLFKPGTTEVQELALCYGGMANRTISALKTTQRQLSKLWKEELLQDVCAGLAEELHLPPDAPGGMVDFRCTLTLSFFFKFYLTVLQKLGQENLEDKCGKLDPTFASATLLFQKDPPADVQLFQEVPKGQSEEDMVGRPLPHLAADMQASGEAVYCDDIPRYENELSLRLVTSTRAHAKIKSIDTSEAKKVPGFVCFISADDVPGSNITGICNDETVFAKDKVTCVGHIIGAVVADTPEHTQRAAQGVKITYEELPAIITIEDAIKNNSFYGPELKIEKGDLKKGFSEADNVVSGEIYIGGQEHFYLETHCTIAVPKGEAGEMELFVSTQNTMKTQSFVAKMLGVPANRIVVRVKRMGGGFGGKETRSTVVSTAVALAAYKTGRPVRCMLDRDEDMLITGGRHPFLARYKVGFMKTGTVVALEVDHFSNVGNTQDLSQSIMERALFHMDNCYKIPNIRGTGRLCKTNLPSNTAFRGFGGPQGMLIAECWMSEVAVTCGMPAEEVRRKNLYKEGDLTHFNQKLEGFTLPRCWEECLASSQYHARKSEVDKFNKENCWKKRGLCIIPTKFGISFTVPFLNQAGALLHVYTDGSVLLTHGGTEMGQGLHTKMVQVASRALKIPTSKIYISETSTNTVPNTSPTAASVSADLNGQAVYAACQTILKRLEPYKKKNPSGSWEDWVTAAYMDTVSLSATGFYRTPNLGYSFETNSGNPFHYFSYGVACSEVEIDCLTGDHKNLRTDIVMDVGSSLNPAIDIGQVEGAFVQGLGLFTLEELHYSPEGSLHTRGPSTYKIPAFGSIPIEFRVSLLRDCPNKKAIYASKAVGEPPLFLAASIFFAIKDAIRAARAQHTGNNVKELFRLDSPATPEKIRNACVDKFTTLCVTGVPENCKPWSVRV.

Residues 4–91 (DKLVFFVNGR…HVAVTTVEGI (88 aa)) form the 2Fe-2S ferredoxin-type domain. Residues cysteine 43, cysteine 48, cysteine 51, cysteine 73, cysteine 113, cysteine 116, cysteine 148, and cysteine 150 each contribute to the [2Fe-2S] cluster site. The 186-residue stretch at 229–414 (FEGERVTWIQ…LSIEIPYSRE (186 aa)) folds into the FAD-binding PCMH-type domain. Residues 257–264 (LVVGNTEI), phenylalanine 337, 347–351 (SVGGN), aspartate 360, leucine 404, and lysine 422 contribute to the FAD site. 2 disulfide bridges follow: cysteine 509/cysteine 1318 and cysteine 536/cysteine 993. Residues glutamine 768 and phenylalanine 799 each coordinate Mo-molybdopterin. Substrate contacts are provided by glutamate 803 and arginine 881. Mo-molybdopterin is bound at residue arginine 913. 2 residues coordinate substrate: phenylalanine 915 and threonine 1011. Mo-molybdopterin is bound at residue alanine 1080. Glutamate 1262 acts as the Proton acceptor in catalysis.

Belongs to the xanthine dehydrogenase family. Homodimer. Interacts with BTN1A1. It depends on [2Fe-2S] cluster as a cofactor. Requires FAD as cofactor. Mo-molybdopterin serves as cofactor. In terms of processing, subject to partial proteolysis; this alters the enzyme from the dehydrogenase form (D) to the oxidase form (O). Contains sulfhydryl groups that are easily oxidized (in vitro); this alters the enzyme from the dehydrogenase form (D) to the oxidase form (O). As to expression, detected in milk (at protein level).

The protein localises to the cytoplasm. It localises to the peroxisome. The protein resides in the secreted. It carries out the reaction xanthine + NAD(+) + H2O = urate + NADH + H(+). The catalysed reaction is hypoxanthine + NAD(+) + H2O = xanthine + NADH + H(+). It catalyses the reaction xanthine + O2 + H2O = urate + H2O2. Its activity is regulated as follows. Can be converted from the dehydrogenase form (D) to the oxidase form (O) irreversibly by proteolysis or reversibly through the oxidation of sulfhydryl groups. Key enzyme in purine degradation. Catalyzes the oxidation of hypoxanthine to xanthine. Catalyzes the oxidation of xanthine to uric acid. Contributes to the generation of reactive oxygen species. Has also low oxidase activity towards aldehydes (in vitro). In Homo sapiens (Human), this protein is Xanthine dehydrogenase/oxidase (XDH).